The following is a 527-amino-acid chain: Protein PyrBI (527 aa).

The tract at residues 1–342 (MKRDFLGRTL…MFGGALEAPF (342 aa)) is aspartate carbamoyltransferase. The linker stretch occupies residues 343-357 (DTSKKEEKPEEDFII). An aspartate carbamoyltransferase regulatory region region spans residues 368 to 527 (VQKEGKRGIK…PHSFEEIWSI (160 aa)). The Zn(2+) site is built by Cys-483, Cys-488, Cys-512, and Cys-515.

It in the N-terminal section; belongs to the aspartate/ornithine carbamoyltransferase superfamily. ATCase family. In the C-terminal section; belongs to the PyrI family.

It catalyses the reaction carbamoyl phosphate + L-aspartate = N-carbamoyl-L-aspartate + phosphate + H(+). Its pathway is pyrimidine metabolism; UMP biosynthesis via de novo pathway; (S)-dihydroorotate from bicarbonate: step 2/3. In Thermotoga maritima (strain ATCC 43589 / DSM 3109 / JCM 10099 / NBRC 100826 / MSB8), this protein is Protein PyrBI (pyrBI).